Reading from the N-terminus, the 195-residue chain is Peptidyl-tRNA hydrolase (195 aa).

Y17 lines the tRNA pocket. H22 (proton acceptor) is an active-site residue. Positions 68, 70, and 116 each coordinate tRNA.

Belongs to the PTH family. As to quaternary structure, monomer.

It localises to the cytoplasm. It catalyses the reaction an N-acyl-L-alpha-aminoacyl-tRNA + H2O = an N-acyl-L-amino acid + a tRNA + H(+). Its function is as follows. Hydrolyzes ribosome-free peptidyl-tRNAs (with 1 or more amino acids incorporated), which drop off the ribosome during protein synthesis, or as a result of ribosome stalling. Functionally, catalyzes the release of premature peptidyl moieties from peptidyl-tRNA molecules trapped in stalled 50S ribosomal subunits, and thus maintains levels of free tRNAs and 50S ribosomes. The protein is Peptidyl-tRNA hydrolase of Erwinia tasmaniensis (strain DSM 17950 / CFBP 7177 / CIP 109463 / NCPPB 4357 / Et1/99).